The chain runs to 133 residues: Ribosomal silencing factor RsfS (133 aa).

The protein belongs to the Iojap/RsfS family. Interacts with ribosomal protein uL14 (rplN).

It localises to the cytoplasm. In terms of biological role, functions as a ribosomal silencing factor. Interacts with ribosomal protein uL14 (rplN), blocking formation of intersubunit bridge B8. Prevents association of the 30S and 50S ribosomal subunits and the formation of functional ribosomes, thus repressing translation. The protein is Ribosomal silencing factor RsfS of Zymomonas mobilis subsp. mobilis (strain ATCC 31821 / ZM4 / CP4).